Reading from the N-terminus, the 621-residue chain is Phosphomethylpyrimidine synthase (621 aa).

Residues Met1–Pro23 show a composition bias toward low complexity. A disordered region spans residues Met1–Tyr29. Substrate is bound by residues Asn215, Met244, Tyr273, His309, Ser329 to Gly331, Asp370 to Arg373, and Glu409. His413 is a binding site for Zn(2+). Residue Tyr436 participates in substrate binding. Residue His477 participates in Zn(2+) binding. [4Fe-4S] cluster-binding residues include Cys557, Cys560, and Cys565.

Belongs to the ThiC family. As to quaternary structure, homodimer. It depends on [4Fe-4S] cluster as a cofactor.

The enzyme catalyses 5-amino-1-(5-phospho-beta-D-ribosyl)imidazole + S-adenosyl-L-methionine = 4-amino-2-methyl-5-(phosphooxymethyl)pyrimidine + CO + 5'-deoxyadenosine + formate + L-methionine + 3 H(+). It participates in cofactor biosynthesis; thiamine diphosphate biosynthesis. Its function is as follows. Catalyzes the synthesis of the hydroxymethylpyrimidine phosphate (HMP-P) moiety of thiamine from aminoimidazole ribotide (AIR) in a radical S-adenosyl-L-methionine (SAM)-dependent reaction. This chain is Phosphomethylpyrimidine synthase, found in Rhodospirillum rubrum (strain ATCC 11170 / ATH 1.1.1 / DSM 467 / LMG 4362 / NCIMB 8255 / S1).